The sequence spans 333 residues: Sphingomyelinase C (333 aa).

The signal sequence occupies residues 1-27; sequence MKGKLLKGVLSFGIGLGVLYGGSSVQA. Cys-150 and Cys-186 are oxidised to a cystine.

It belongs to the neutral sphingomyelinase family. It depends on Mg(2+) as a cofactor.

The protein resides in the secreted. The catalysed reaction is a sphingomyelin + H2O = phosphocholine + an N-acylsphing-4-enine + H(+). With respect to regulation, activated by cobalt and manganese ions. Functionally, required, with sphingomyelinase, to effect target cell lysis (hemolysis). In Bacillus cereus, this protein is Sphingomyelinase C (sph).